The chain runs to 224 residues: Uracil-DNA glycosylase (224 aa).

D61 (proton acceptor) is an active-site residue.

This sequence belongs to the uracil-DNA glycosylase (UDG) superfamily. UNG family.

The protein localises to the cytoplasm. It catalyses the reaction Hydrolyzes single-stranded DNA or mismatched double-stranded DNA and polynucleotides, releasing free uracil.. Its function is as follows. Excises uracil residues from the DNA which can arise as a result of misincorporation of dUMP residues by DNA polymerase or due to deamination of cytosine. This Mannheimia succiniciproducens (strain KCTC 0769BP / MBEL55E) protein is Uracil-DNA glycosylase.